A 374-amino-acid chain; its full sequence is Chaperone protein DnaJ (374 aa).

The J domain occupies 5-70 (DYYEVLGVAR…NKRRMYDSHG (66 aa)). A CR-type zinc finger spans residues 130–207 (GVERRIEIPT…CHGNGRVEED (78 aa)). Zn(2+) is bound by residues cysteine 143, cysteine 146, cysteine 159, cysteine 162, cysteine 181, cysteine 184, cysteine 195, and cysteine 198. CXXCXGXG motif repeat units follow at residues 143 to 150 (CGDCDGSG), 159 to 166 (CNVCHGRG), 181 to 188 (CHNCGGRG), and 195 to 202 (CKTCHGNG).

The protein belongs to the DnaJ family. As to quaternary structure, homodimer. The cofactor is Zn(2+).

Its subcellular location is the cytoplasm. In terms of biological role, participates actively in the response to hyperosmotic and heat shock by preventing the aggregation of stress-denatured proteins and by disaggregating proteins, also in an autonomous, DnaK-independent fashion. Unfolded proteins bind initially to DnaJ; upon interaction with the DnaJ-bound protein, DnaK hydrolyzes its bound ATP, resulting in the formation of a stable complex. GrpE releases ADP from DnaK; ATP binding to DnaK triggers the release of the substrate protein, thus completing the reaction cycle. Several rounds of ATP-dependent interactions between DnaJ, DnaK and GrpE are required for fully efficient folding. Also involved, together with DnaK and GrpE, in the DNA replication of plasmids through activation of initiation proteins. The sequence is that of Chaperone protein DnaJ from Stenotrophomonas maltophilia (strain K279a).